We begin with the raw amino-acid sequence, 726 residues long: Replication restart protein PriA (726 aa).

I234 is an ATP binding site. In terms of domain architecture, Helicase ATP-binding spans I234–L373. The DEAH box motif lies at L316 to H319. Positions 431, 434, 440, 443, 458, 461, 471, and 474 each coordinate Zn(2+).

The protein belongs to the helicase family. PriA subfamily. As to quaternary structure, component of the replication restart primosome. Zn(2+) is required as a cofactor.

The catalysed reaction is Couples ATP hydrolysis with the unwinding of duplex DNA by translocating in the 3'-5' direction.. The enzyme catalyses ATP + H2O = ADP + phosphate + H(+). Its function is as follows. Initiates the restart of stalled replication forks, which reloads the replicative helicase on sites other than the origin of replication. Recognizes and binds to abandoned replication forks and remodels them to uncover a helicase loading site. Promotes assembly of the primosome at these replication forks. This is Replication restart protein PriA from Buchnera aphidicola subsp. Acyrthosiphon pisum (strain APS) (Acyrthosiphon pisum symbiotic bacterium).